Here is a 261-residue protein sequence, read N- to C-terminus: Thiamine thiazole synthase (261 aa).

NAD(+) is bound by residues serine 40, 59–60 (ER), glycine 67, valine 133, and 159–161 (HID). 2 residues coordinate Fe cation: aspartate 161 and histidine 176. Residues serine 179 and methionine 226 each coordinate NAD(+). Arginine 236 is a binding site for glycine.

This sequence belongs to the THI4 family. Homooctamer; tetramer of dimers. Requires Fe(2+) as cofactor.

The catalysed reaction is hydrogen sulfide + glycine + NAD(+) = ADP-5-ethyl-4-methylthiazole-2-carboxylate + nicotinamide + 3 H2O + H(+). It functions in the pathway cofactor biosynthesis; thiamine diphosphate biosynthesis. Its function is as follows. Involved in the biosynthesis of the thiazole moiety of thiamine. Catalyzes the conversion of NAD and glycine to adenosine diphosphate 5-(2-hydroxyethyl)-4-methylthiazole-2-carboxylate (ADT), an adenylated thiazole intermediate, using free sulfide as a source of sulfur. The polypeptide is Thiamine thiazole synthase (Methanococcus maripaludis (strain C6 / ATCC BAA-1332)).